Reading from the N-terminus, the 187-residue chain is Alkyl hydroperoxide reductase C (187 aa).

The region spanning Ser2–Tyr157 is the Thioredoxin domain. Cys47 functions as the Cysteine sulfenic acid (-SOH) intermediate in the catalytic mechanism.

Belongs to the peroxiredoxin family. AhpC/Prx1 subfamily. Homodimer; disulfide-linked, upon oxidation. 5 homodimers assemble to form a ring-like decamer.

Its subcellular location is the cytoplasm. It is found in the secreted. It carries out the reaction a hydroperoxide + NADH + H(+) = an alcohol + NAD(+) + H2O. In terms of biological role, thiol-specific peroxidase that catalyzes the reduction of hydrogen peroxide and organic hydroperoxides to water and alcohols, respectively. Plays a role in cell protection against oxidative stress by detoxifying peroxides. The sequence is that of Alkyl hydroperoxide reductase C (ahpC) from Pseudomonas aeruginosa (strain UCBPP-PA14).